Here is a 359-residue protein sequence, read N- to C-terminus: Peptide chain release factor 1 (359 aa).

Residue Gln-236 is modified to N5-methylglutamine. Residues 288–307 (QDEQDAERKSTIGTGDRSER) form a disordered region. Residues 293-307 (AERKSTIGTGDRSER) are compositionally biased toward basic and acidic residues.

Belongs to the prokaryotic/mitochondrial release factor family. In terms of processing, methylated by PrmC. Methylation increases the termination efficiency of RF1.

It localises to the cytoplasm. In terms of biological role, peptide chain release factor 1 directs the termination of translation in response to the peptide chain termination codons UAG and UAA. This chain is Peptide chain release factor 1 (prfA), found in Streptococcus gordonii (strain Challis / ATCC 35105 / BCRC 15272 / CH1 / DL1 / V288).